The primary structure comprises 152 residues: Small ribosomal subunit protein bS6 (152 aa).

Residues 94–152 (VKQEGPLPTPKPSNKSSTQSENKDNPETKVESKEEQSVTNSDTSTTKKDDNEIKENTES) form a disordered region. Composition is skewed to basic and acidic residues over residues 114-129 (ENKD…KEEQ) and 138-152 (TTKK…NTES).

It belongs to the bacterial ribosomal protein bS6 family.

Binds together with bS18 to 16S ribosomal RNA. This is Small ribosomal subunit protein bS6 from Prochlorococcus marinus (strain MIT 9312).